A 127-amino-acid chain; its full sequence is Aspartate 1-decarboxylase (127 aa).

The Schiff-base intermediate with substrate; via pyruvic acid role is filled by serine 25. Residue serine 25 is modified to Pyruvic acid (Ser). Threonine 57 lines the substrate pocket. Residue tyrosine 58 is the Proton donor of the active site. Glycine 73–alanine 75 contributes to the substrate binding site.

Belongs to the PanD family. In terms of assembly, heterooctamer of four alpha and four beta subunits. Requires pyruvate as cofactor. Is synthesized initially as an inactive proenzyme, which is activated by self-cleavage at a specific serine bond to produce a beta-subunit with a hydroxyl group at its C-terminus and an alpha-subunit with a pyruvoyl group at its N-terminus.

Its subcellular location is the cytoplasm. It catalyses the reaction L-aspartate + H(+) = beta-alanine + CO2. It functions in the pathway cofactor biosynthesis; (R)-pantothenate biosynthesis; beta-alanine from L-aspartate: step 1/1. In terms of biological role, catalyzes the pyruvoyl-dependent decarboxylation of aspartate to produce beta-alanine. This is Aspartate 1-decarboxylase from Listeria innocua serovar 6a (strain ATCC BAA-680 / CLIP 11262).